The sequence spans 137 residues: Large ribosomal subunit protein uL16 (137 aa).

The protein belongs to the universal ribosomal protein uL16 family. Part of the 50S ribosomal subunit.

Functionally, binds 23S rRNA and is also seen to make contacts with the A and possibly P site tRNAs. The protein is Large ribosomal subunit protein uL16 of Streptococcus mutans serotype c (strain ATCC 700610 / UA159).